The chain runs to 229 residues: 2,3-bisphosphoglycerate-dependent phosphoglycerate mutase (229 aa).

Substrate contacts are provided by residues 7 to 14 (RHGQSEWN), 20 to 21 (TG), Arg59, 86 to 89 (ERHY), Lys97, 113 to 114 (RR), and 182 to 183 (GN). The Tele-phosphohistidine intermediate role is filled by His8. The Proton donor/acceptor role is filled by Glu86.

This sequence belongs to the phosphoglycerate mutase family. BPG-dependent PGAM subfamily.

The enzyme catalyses (2R)-2-phosphoglycerate = (2R)-3-phosphoglycerate. It functions in the pathway carbohydrate degradation; glycolysis; pyruvate from D-glyceraldehyde 3-phosphate: step 3/5. Its function is as follows. Catalyzes the interconversion of 2-phosphoglycerate and 3-phosphoglycerate. The sequence is that of 2,3-bisphosphoglycerate-dependent phosphoglycerate mutase from Listeria monocytogenes serotype 4b (strain F2365).